Here is a 386-residue protein sequence, read N- to C-terminus: Phosphomevalonate dehydratase large subunit (386 aa).

Positions 48, 49, 50, 53, 63, 79, and 80 each coordinate (R)-5-phosphomevalonate. Cysteine 110 lines the [4Fe-4S] cluster pocket. (R)-5-phosphomevalonate is bound by residues glutamate 129 and serine 130. 2 residues coordinate [4Fe-4S] cluster: cysteine 283 and cysteine 342. Lysine 361 is a binding site for (R)-5-phosphomevalonate.

It belongs to the AcnX type II large subunit family. In terms of assembly, heterodimer composed of a large subunit (PMDh-L) and a small subunit (PMDh-S). The cofactor is [4Fe-4S] cluster.

It carries out the reaction (R)-5-phosphomevalonate = (2E)-3-methyl-5-phosphooxypent-2-enoate + H2O. Its pathway is isoprenoid biosynthesis; isopentenyl diphosphate biosynthesis via mevalonate pathway. Functionally, component of a hydro-lyase that catalyzes the dehydration of mevalonate 5-phosphate (MVA5P) to form trans-anhydromevalonate 5-phosphate (tAHMP). Involved in the archaeal mevalonate (MVA) pathway, which provides fundamental precursors for isoprenoid biosynthesis, such as isopentenyl diphosphate (IPP) and dimethylallyl diphosphate (DMAPP). This Thermococcus kodakarensis (strain ATCC BAA-918 / JCM 12380 / KOD1) (Pyrococcus kodakaraensis (strain KOD1)) protein is Phosphomevalonate dehydratase large subunit.